The chain runs to 330 residues: Methionyl-tRNA formyltransferase (330 aa).

112-115 (SLLP) is a binding site for (6S)-5,6,7,8-tetrahydrofolate.

The protein belongs to the Fmt family.

The enzyme catalyses L-methionyl-tRNA(fMet) + (6R)-10-formyltetrahydrofolate = N-formyl-L-methionyl-tRNA(fMet) + (6S)-5,6,7,8-tetrahydrofolate + H(+). Its function is as follows. Attaches a formyl group to the free amino group of methionyl-tRNA(fMet). The formyl group appears to play a dual role in the initiator identity of N-formylmethionyl-tRNA by promoting its recognition by IF2 and preventing the misappropriation of this tRNA by the elongation apparatus. The chain is Methionyl-tRNA formyltransferase from Alcanivorax borkumensis (strain ATCC 700651 / DSM 11573 / NCIMB 13689 / SK2).